Reading from the N-terminus, the 399-residue chain is Succinate--CoA ligase [ADP-forming] subunit beta (399 aa).

In terms of domain architecture, ATP-grasp spans 9-254; sequence KAVLQPFGVS…TTEEDAKEIE (246 aa). Residues Lys46, 53-55, Glu109, Ser112, and Glu117 contribute to the ATP site; that span reads GRG. Mg(2+) contacts are provided by Asn209 and Asp223. Substrate-binding positions include Asn274 and 331–333; that span reads GIM.

This sequence belongs to the succinate/malate CoA ligase beta subunit family. Heterotetramer of two alpha and two beta subunits. Mg(2+) is required as a cofactor.

The enzyme catalyses succinate + ATP + CoA = succinyl-CoA + ADP + phosphate. The catalysed reaction is GTP + succinate + CoA = succinyl-CoA + GDP + phosphate. It functions in the pathway carbohydrate metabolism; tricarboxylic acid cycle; succinate from succinyl-CoA (ligase route): step 1/1. Succinyl-CoA synthetase functions in the citric acid cycle (TCA), coupling the hydrolysis of succinyl-CoA to the synthesis of either ATP or GTP and thus represents the only step of substrate-level phosphorylation in the TCA. The beta subunit provides nucleotide specificity of the enzyme and binds the substrate succinate, while the binding sites for coenzyme A and phosphate are found in the alpha subunit. This is Succinate--CoA ligase [ADP-forming] subunit beta from Rhodopseudomonas palustris (strain BisA53).